The sequence spans 185 residues: Somatotropin (185 aa).

A disulfide bond links Cys-52 and Cys-158. Glu-167 contacts Zn(2+). Cys-175 and Cys-183 form a disulfide bridge.

The protein belongs to the somatotropin/prolactin family.

It is found in the secreted. Growth hormone plays an important role in growth control and is involved in the regulation of several anabolic processes. Implicated as an osmoregulatory substance important for seawater adaptation. The chain is Somatotropin (gh) from Katsuwonus pelamis (Skipjack tuna).